A 208-amino-acid chain; its full sequence is Uracil phosphoribosyltransferase (208 aa).

5-phospho-alpha-D-ribose 1-diphosphate-binding positions include arginine 78, arginine 103, and 130–138; that span reads DPMLATGGS. Residues isoleucine 193 and 198 to 200 each bind uracil; that span reads GDA. Residue aspartate 199 coordinates 5-phospho-alpha-D-ribose 1-diphosphate.

It belongs to the UPRTase family. Requires Mg(2+) as cofactor.

It carries out the reaction UMP + diphosphate = 5-phospho-alpha-D-ribose 1-diphosphate + uracil. Its pathway is pyrimidine metabolism; UMP biosynthesis via salvage pathway; UMP from uracil: step 1/1. Allosterically activated by GTP. Catalyzes the conversion of uracil and 5-phospho-alpha-D-ribose 1-diphosphate (PRPP) to UMP and diphosphate. The polypeptide is Uracil phosphoribosyltransferase (Histophilus somni (strain 129Pt) (Haemophilus somnus)).